A 655-amino-acid polypeptide reads, in one-letter code: p-hydroxybenzoic acid efflux pump subunit AaeB (655 aa).

Helical transmembrane passes span 13–33 (FAVK…HFQL), 38–58 (WAVL…GGEP), 69–89 (LRII…ILMI), 93–113 (LLMV…SSLV), 121–141 (WGLA…EPLL), 152–172 (EIVI…PRSI), 370–390 (LFWL…IAVV), 407–427 (FLYG…VILP), 431–451 (QSML…GIEV), 459–479 (LGAL…TFHF), and 482–502 (FLDS…VILL).

It belongs to the aromatic acid exporter ArAE (TC 2.A.85) family.

Its subcellular location is the cell inner membrane. Forms an efflux pump with AaeA. Could function as a metabolic relief valve, allowing to eliminate certain compounds when they accumulate to high levels in the cell. This chain is p-hydroxybenzoic acid efflux pump subunit AaeB, found in Enterobacter cloacae subsp. cloacae (strain ATCC 13047 / DSM 30054 / NBRC 13535 / NCTC 10005 / WDCM 00083 / NCDC 279-56).